Reading from the N-terminus, the 204-residue chain is UPF0637 protein lwe1043 (204 aa).

The protein belongs to the UPF0637 family.

The protein is UPF0637 protein lwe1043 of Listeria welshimeri serovar 6b (strain ATCC 35897 / DSM 20650 / CCUG 15529 / CIP 8149 / NCTC 11857 / SLCC 5334 / V8).